The primary structure comprises 428 residues: Enolase (428 aa).

Gln167 is a (2R)-2-phosphoglycerate binding site. The Proton donor role is filled by Glu209. Residues Asp246, Glu288, and Asp315 each coordinate Mg(2+). Residues Lys340, Arg369, Ser370, and Lys391 each contribute to the (2R)-2-phosphoglycerate site. The active-site Proton acceptor is the Lys340.

The protein belongs to the enolase family. Component of the RNA degradosome, a multiprotein complex involved in RNA processing and mRNA degradation. Mg(2+) serves as cofactor.

Its subcellular location is the cytoplasm. It localises to the secreted. It is found in the cell surface. The catalysed reaction is (2R)-2-phosphoglycerate = phosphoenolpyruvate + H2O. It participates in carbohydrate degradation; glycolysis; pyruvate from D-glyceraldehyde 3-phosphate: step 4/5. Catalyzes the reversible conversion of 2-phosphoglycerate (2-PG) into phosphoenolpyruvate (PEP). It is essential for the degradation of carbohydrates via glycolysis. The sequence is that of Enolase from Pseudomonas savastanoi pv. phaseolicola (strain 1448A / Race 6) (Pseudomonas syringae pv. phaseolicola (strain 1448A / Race 6)).